A 149-amino-acid polypeptide reads, in one-letter code: 3-dehydroquinate dehydratase (149 aa).

The Proton acceptor role is filled by tyrosine 26. Asparagine 77, histidine 83, and aspartate 90 together coordinate substrate. Histidine 103 (proton donor) is an active-site residue. Substrate is bound by residues 104–105 and arginine 114; that span reads LS.

Belongs to the type-II 3-dehydroquinase family. In terms of assembly, homododecamer.

It carries out the reaction 3-dehydroquinate = 3-dehydroshikimate + H2O. Its pathway is metabolic intermediate biosynthesis; chorismate biosynthesis; chorismate from D-erythrose 4-phosphate and phosphoenolpyruvate: step 3/7. Catalyzes a trans-dehydration via an enolate intermediate. This is 3-dehydroquinate dehydratase (aroQ) from Haemophilus influenzae (strain ATCC 51907 / DSM 11121 / KW20 / Rd).